Consider the following 626-residue polypeptide: Procollagen galactosyltransferase 2 (626 aa).

An N-terminal signal peptide occupies residues 1–27; sequence MAARPAATLAWSLLLLSSALLREGCRA. N-linked (GlcNAc...) asparagine glycans are attached at residues asparagine 97, asparagine 185, asparagine 382, and asparagine 580. Positions 604–626 are disordered; sequence NAKNTEALPPPTSLDTVPSRDEL. The Prevents secretion from ER motif lies at 623–626; that stretch reads RDEL.

It belongs to the glycosyltransferase 25 family. As to expression, expressed in brain and skeletal muscle.

The protein localises to the endoplasmic reticulum lumen. It catalyses the reaction (5R)-5-hydroxy-L-lysyl-[collagen] + UDP-alpha-D-galactose = (5R)-5-O-(beta-D-galactosyl)-5-hydroxy-L-lysyl-[collagen] + UDP + H(+). Functionally, beta-galactosyltransferase that transfers beta-galactose to hydroxylysine residues of collagen. The sequence is that of Procollagen galactosyltransferase 2 (COLGALT2) from Homo sapiens (Human).